Reading from the N-terminus, the 394-residue chain is Probable dual specificity protein phosphatase DDB_G0281963 (394 aa).

One can recognise a Tyrosine-protein phosphatase domain in the interval 2–142; the sequence is NDVSRIFPGF…LKKYELILKK (141 aa). Cys86 serves as the catalytic Phosphocysteine intermediate. The segment at 147-191 is disordered; that stretch reads PQIVEKESEEEDDDEDDDDDDYDSDEDDDDDSEDDDFEEEFDNVV. Residues 153–188 are compositionally biased toward acidic residues; it reads ESEEEDDDEDDDDDDYDSDEDDDDDSEDDDFEEEFD.

Belongs to the protein-tyrosine phosphatase family. Non-receptor class dual specificity subfamily.

It carries out the reaction O-phospho-L-tyrosyl-[protein] + H2O = L-tyrosyl-[protein] + phosphate. The enzyme catalyses O-phospho-L-seryl-[protein] + H2O = L-seryl-[protein] + phosphate. The catalysed reaction is O-phospho-L-threonyl-[protein] + H2O = L-threonyl-[protein] + phosphate. Has a dual specificity toward Ser/Thr and Tyr-containing proteins. The sequence is that of Probable dual specificity protein phosphatase DDB_G0281963 from Dictyostelium discoideum (Social amoeba).